The chain runs to 384 residues: Actin-binding Rho-activating protein (384 aa).

Residues 1–11 (MARGEKGRGEG) show a composition bias toward basic and acidic residues. Disordered regions lie at residues 1–20 (MARG…LRKV), 32–159 (GWQQ…SPTR), and 181–211 (EQEE…EQDG). Positions 35 to 47 (QWANENSTRQAQE) are enriched in polar residues. The segment covering 134-145 (DGDEPEPEQPES) has biased composition (acidic residues). Phosphoserine is present on residues S156 and S191. 2 actin-binding regions span residues 202–302 (ETEE…AERA) and 303–384 (KRAE…TLLK). Interaction with actin stretches follow at residues 243–288 (SQVG…GDEG) and 355–384 (MRAR…TLLK).

In terms of assembly, binds F-actin and ABLIM1, ABLIM2 and ABLIM3. Interaction with ABLIM2 and ABLIM3 enhances activity. As to expression, specifically expressed in heart and skeletal muscles.

It is found in the cytoplasm. Its subcellular location is the myofibril. The protein localises to the sarcomere. It localises to the cytoskeleton. Its function is as follows. Acts as an activator of serum response factor (SRF)-dependent transcription possibly by inducing nuclear translocation of MKL1 or MKL2 and through a mechanism requiring Rho-actin signaling. This Sus scrofa (Pig) protein is Actin-binding Rho-activating protein (ABRA).